We begin with the raw amino-acid sequence, 189 residues long: Probable nicotinate-nucleotide adenylyltransferase (189 aa).

It belongs to the NadD family.

The catalysed reaction is nicotinate beta-D-ribonucleotide + ATP + H(+) = deamido-NAD(+) + diphosphate. Its pathway is cofactor biosynthesis; NAD(+) biosynthesis; deamido-NAD(+) from nicotinate D-ribonucleotide: step 1/1. Its function is as follows. Catalyzes the reversible adenylation of nicotinate mononucleotide (NaMN) to nicotinic acid adenine dinucleotide (NaAD). This chain is Probable nicotinate-nucleotide adenylyltransferase, found in Caulobacter sp. (strain K31).